The primary structure comprises 194 residues: Recombination protein RecR (194 aa).

The segment at 55–70 adopts a C4-type zinc-finger fold; sequence CRECGNLAEGELCPIC. In terms of domain architecture, Toprim spans 78-171; sequence SLLAVVESVA…RVTRPAYGLP (94 aa).

Belongs to the RecR family.

In terms of biological role, may play a role in DNA repair. It seems to be involved in an RecBC-independent recombinational process of DNA repair. It may act with RecF and RecO. This chain is Recombination protein RecR, found in Thermus thermophilus (strain ATCC BAA-163 / DSM 7039 / HB27).